The primary structure comprises 1936 residues: Trinucleotide repeat-containing gene 6C protein (1936 aa).

The span at 1–31 (MEEKKKKKQEEKKKKEGAQKKAADQKTKVPE) shows a compositional bias: basic and acidic residues. 6 disordered regions span residues 1–160 (MEEK…PTYR), 181–256 (PSIT…NSNG), 366–412 (PQES…AMQT), 439–931 (NGSS…IRRK), 961–1063 (VIQS…VAFG), and 1115–1139 (ESTSSCSSWGNAPKKGLQKGMKTSG). Over residues 34–44 (KTCSSQPQPAG) the composition is skewed to polar residues. Residues 45-57 (TSTSTSTSTISSS) are compositionally biased toward low complexity. Polar residues predominate over residues 58-71 (NNGKRASASGQQPA). Residues 76-88 (LPREVPPRFRQQE) are compositionally biased toward basic and acidic residues. Polar residues-rich tracts occupy residues 100–111 (PTGTLTSVSPTQ) and 183–217 (ITGTETESASECTTDTDSASNCGSENSSMATGSAQ). The interval 211–1133 (MATGSAQGNF…GNAPKKGLQK (923 aa)) is sufficient for interaction with argonaute family proteins. Positions 218-235 (GNFTGHTKKTNGNNGTNG) are enriched in low complexity. Positions 366–393 (PQESTEPQTSTSQNVSFSAQPQNLNTDG) are enriched in polar residues. Low complexity-rich tracts occupy residues 394-408 (PNNTNPMNSSPNPIN), 439-453 (NGSSVSQVSGGSAEG), and 469-480 (GNSNSGFSQGNG). A compositionally biased stretch (polar residues) spans 481–498 (DTVNSALSAKQNGSSSAV). An Omega-N-methylarginine modification is found at Arg523. A compositionally biased stretch (polar residues) spans 572–585 (GWESPSVTSQNPTV). Low complexity predominate over residues 594–614 (SWAKAASSGTTASEGSSDGSG). The span at 625 to 636 (GTGEGRRRDKGI) shows a compositional bias: basic and acidic residues. Positions 654 to 669 (LSNTGWGQTPVKQNTA) are enriched in polar residues. Residues 674–684 (ESPRSERKNDN) are compositionally biased toward basic and acidic residues. Ser675 carries the phosphoserine modification. The span at 694 to 718 (TQASNSGGKNDGSIMNSTNTSSVSG) shows a compositional bias: polar residues. 2 stretches are compositionally biased toward low complexity: residues 720-730 (VNAPPAAVPAN) and 750-772 (SISSTAVSTAAAAKSGHAWSGAA). Composition is skewed to polar residues over residues 834–866 (NRSGSGWNDTTRSGNSGWGNSTNTKANPGTNWG) and 873–888 (PQQNWASKPQDNNVSN). Ser924 is modified (phosphoserine). A compositionally biased stretch (low complexity) spans 964–982 (SSTTTNTTTTTTTTTSNTT). Thr987 is modified (phosphothreonine). Over residues 1021 to 1035 (ENSWGEPSSPSTLVD) the composition is skewed to polar residues. The UBA domain maps to 1140–1185 (KQDEAWIMSRLIKQLTDMGFPREPAEEALKSNNMNLDQAMSALLEK). Ser1218 is modified (phosphoserine). 4 disordered regions span residues 1291–1312 (AAQARTMQQPPQPPVQPLNSSQ), 1419–1658 (VKQP…PSSS), 1689–1732 (STWS…PSST), and 1848–1869 (TSSWQSSSASSQPRLSAAGSSH). The stretch at 1388-1419 (MRQQEQQVARTITNLQQQIQQHQRQLAQALLV) forms a coiled coil. Positions 1421-1430 (QPPPPPPPPH) are enriched in pro residues. The tract at residues 1467-1936 (NTFAPYPLAG…PGDLLSGESL (470 aa)) is silencing domain; interaction with CNOT1 and PAN3. The segment covering 1496-1515 (DPSQSQSRLPQWTHPNSMDN) has biased composition (polar residues). The required for interaction with PABPC1 stretch occupies residues 1578 to 1624 (KSDSDKISNGSSINWPPEFHPGVPWKGLQNIDPENDPDVTPGSVPTG). The tract at residues 1578-1936 (KSDSDKISNG…PGDLLSGESL (359 aa)) is sufficient for translational repression when tethered to a target mRNA. Residues 1588–1606 (SSINWPPEFHPGVPWKGLQ) are PABPC1-interacting motif-2 (PAM2). The span at 1623–1633 (TGPTINTTIQD) shows a compositional bias: polar residues. Over residues 1641–1658 (SGGSSPPSSQNATLPSSS) the composition is skewed to low complexity. Residues 1689–1703 (STWSSGPTSHTQASL) are compositionally biased toward polar residues. One can recognise an RRM domain in the interval 1811 to 1878 (AQKSLHMCVL…HGLVRSDAGH (68 aa)). Positions 1842-1936 (GQALPPTSSW…PGDLLSGESL (95 aa)) are interaction with the CCR4-NOT complex. The span at 1848–1865 (TSSWQSSSASSQPRLSAA) shows a compositional bias: low complexity.

It belongs to the GW182 family. In terms of assembly, interacts with one or more of the argonaute family proteins AGO1, AGO2, AGO3 and AGO4. Interacts with PABPC1 and EIF4G1. Interacts with CNOT1; the interaction is direct and mediates the association with the CCR4-NOT complex. Interacts with PAN3; the interaction mediates the association with the PAN complex.

Functionally, plays a role in RNA-mediated gene silencing by micro-RNAs (miRNAs). Required for miRNA-dependent translational repression of complementary mRNAs by argonaute family proteins. As scaffoldng protein associates with argonaute proteins bound to partially complementary mRNAs and simultaneously can recruit CCR4-NOT and PAN deadenylase complexes. This Homo sapiens (Human) protein is Trinucleotide repeat-containing gene 6C protein (TNRC6C).